A 310-amino-acid polypeptide reads, in one-letter code: tRNA pseudouridine synthase B (310 aa).

Catalysis depends on Asp-38, which acts as the Nucleophile.

It belongs to the pseudouridine synthase TruB family. Type 1 subfamily.

It catalyses the reaction uridine(55) in tRNA = pseudouridine(55) in tRNA. Its function is as follows. Responsible for synthesis of pseudouridine from uracil-55 in the psi GC loop of transfer RNAs. This is tRNA pseudouridine synthase B from Geotalea uraniireducens (strain Rf4) (Geobacter uraniireducens).